Here is a 207-residue protein sequence, read N- to C-terminus: Large ribosomal subunit protein uL4 (207 aa).

The tract at residues 47–78 (GTASSKTRAEVRGGGKKPWRQKGTGRARVGSS) is disordered. The segment covering 60-71 (GGKKPWRQKGTG) has biased composition (basic residues).

It belongs to the universal ribosomal protein uL4 family. As to quaternary structure, part of the 50S ribosomal subunit.

One of the primary rRNA binding proteins, this protein initially binds near the 5'-end of the 23S rRNA. It is important during the early stages of 50S assembly. It makes multiple contacts with different domains of the 23S rRNA in the assembled 50S subunit and ribosome. In terms of biological role, forms part of the polypeptide exit tunnel. In Syntrophomonas wolfei subsp. wolfei (strain DSM 2245B / Goettingen), this protein is Large ribosomal subunit protein uL4.